We begin with the raw amino-acid sequence, 433 residues long: Keratin, type I cytoskeletal 47 kDa (433 aa).

Positions 1–73 are head; the sequence is MSYSTRSISQ…AFNVSVTSNN (73 aa). The segment at 74-109 is coil 1A; the sequence is GKETMQNLNDRLANYLDRVRSLEQANHELELKIREY. An IF rod domain is found at 74–385; the sequence is GKETMQNLND…RLLEGEDTRF (312 aa). Residues 110–127 form a linker 1 region; sequence LDKKAAVGSLDYSGYYNT. The coil 1B stretch occupies residues 128-219; sequence INLLRSQIND…KNHEEELAVV (92 aa). Residues 220 to 242 form a linker 12 region; that stretch reads RSSARGNVDVQVDSAPPVDLAQI. The interval 243-381 is coil 2; the sequence is MADVRSQYES…ATYRRLLEGE (139 aa). Positions 382–433 are tail; sequence DTRFSQTETQKAVTIVSKEQSSSSIKKVKTVIEEVVDGKVVSSRVEELTETS.

It belongs to the intermediate filament family. As to quaternary structure, heterotetramer of two type I and two type II keratins.

The polypeptide is Keratin, type I cytoskeletal 47 kDa (xk70a) (Xenopus laevis (African clawed frog)).